A 377-amino-acid chain; its full sequence is Prostaglandin reductase-3 (377 aa).

Lys-35 carries the post-translational modification N6-acetyllysine. Residues Thr-185, Ser-205, Lys-209, Tyr-224, Ser-247, Ile-269, and Tyr-275 each contribute to the NADP(+) site. Position 299 is a phosphoserine (Ser-299). Residues Phe-303–Leu-305 and Asn-361 each bind NADP(+).

The protein belongs to the zinc-containing alcohol dehydrogenase family. Quinone oxidoreductase subfamily. In terms of tissue distribution, widely expressed.

It is found in the peroxisome. The catalysed reaction is 13,14-dihydro-15-oxo-prostaglandin E2 + NADP(+) = 15-oxoprostaglandin E2 + NADPH + H(+). It carries out the reaction 13,14-dihydro-15-oxo-prostaglandin E1 + NADP(+) = 15-oxoprostaglandin E1 + NADPH + H(+). The enzyme catalyses 13,14-dihydro-15-oxo-PGF2alpha + NADP(+) = 15-oxoprostaglandin F2alpha + NADPH + H(+). It catalyses the reaction 13,14-dihydro-15-oxo-prostaglandin F1alpha + NADP(+) = 15-oxoprostaglandin F1alpha + NADPH + H(+). Functionally, functions as 15-oxo-prostaglandin 13-reductase and acts on 15-keto-PGE1, 15-keto-PGE2, 15-keto-PGE1-alpha and 15-keto-PGE2-alpha with highest efficiency towards 15-keto-PGE2-alpha. Overexpression represses transcriptional activity of PPARG and inhibits adipocyte differentiation. The chain is Prostaglandin reductase-3 from Mus musculus (Mouse).